The chain runs to 237 residues: 7-cyano-7-deazaguanine synthase (237 aa).

Residue 9–19 (YSGGLDSTTCL) participates in ATP binding. Zn(2+)-binding residues include cysteine 189, cysteine 199, cysteine 202, and cysteine 205.

This sequence belongs to the QueC family. Zn(2+) is required as a cofactor.

It carries out the reaction 7-carboxy-7-deazaguanine + NH4(+) + ATP = 7-cyano-7-deazaguanine + ADP + phosphate + H2O + H(+). Its pathway is purine metabolism; 7-cyano-7-deazaguanine biosynthesis. Catalyzes the ATP-dependent conversion of 7-carboxy-7-deazaguanine (CDG) to 7-cyano-7-deazaguanine (preQ(0)). This Geobacter metallireducens (strain ATCC 53774 / DSM 7210 / GS-15) protein is 7-cyano-7-deazaguanine synthase.